Here is a 661-residue protein sequence, read N- to C-terminus: Kininogen-1 (661 aa).

Residues 1-20 (MKLITTLLLCSGLLLTLTQG) form the signal peptide. The Cystatin kininogen-type 1 domain maps to 28–131 (CNDEAVFQAV…TQTCKIAPSK (104 aa)). 9 disulfide bridges follow: Cys28–Cys631, Cys83–Cys94, Cys107–Cys125, Cys141–Cys144, Cys205–Cys217, Cys228–Cys247, Cys263–Cys266, Cys327–Cys339, and Cys350–Cys369. Residue Asn82 is glycosylated (N-linked (GlcNAc...) asparagine). The 104-residue stretch at 150–253 (TDSPDLEPVL…SQSCTLYSGD (104 aa)) folds into the Cystatin kininogen-type 2 domain. N-linked (GlcNAc...) asparagine glycosylation is found at Asn168 and Asn204. Asn242 is a glycosylation site (N-linked (GlcNAc...) asparagine). Residues 272-375 (VDSPELKEVL…TVKCQALDMT (104 aa)) enclose the Cystatin kininogen-type 3 domain. Residue Ser331 is modified to Phosphoserine. 3 disordered regions span residues 405-471 (YIAR…LGHG), 485-583 (DGDD…FQDS), and 626-661 (ATSPKCPGRPWKPASWEDPNTETTEFSDFDLLDALS). Basic residues-rich tracts occupy residues 434 to 471 (KANKNHRGHKHGHDHGHWSPRRHGLGHGHQKPHGLGHG) and 492 to 526 (TVGHGHGHGHGHGHGHGHGHGHGHGHGHGHGHGKH). The span at 541-555 (TESLASSSEYSTTST) shows a compositional bias: low complexity. Positions 650–661 (EFSDFDLLDALS) are enriched in acidic residues.

Isoform LMW interacts with CRISP3. In terms of processing, bradykinin is released from kininogen by plasma kallikrein. Phosphorylated by FAM20C in the extracellular medium. Post-translationally, bradykinin is inactivated by ACE, which removes the dipeptide Arg-Phe from its C-terminus. Plasma.

Its subcellular location is the secreted. The protein resides in the extracellular space. Its function is as follows. Kininogens are inhibitors of thiol proteases. HMW-kininogen plays an important role in blood coagulation by helping to position optimally prekallikrein and factor XI next to factor XII; HMW-kininogen inhibits the thrombin- and plasmin-induced aggregation of thrombocytes. LMW-kininogen inhibits the aggregation of thrombocytes. LMW-kininogen is in contrast to HMW-kininogen not involved in blood clotting. Functionally, the active peptide bradykinin is a potent vasodilatator that is released from HMW-kininogen shows a variety of physiological effects: (A) influence in smooth muscle contraction, (B) induction of hypotension, (C) natriuresis and diuresis, (D) decrease in blood glucose level, (E) it is a mediator of inflammation and causes (E1) increase in vascular permeability, (E2) stimulation of nociceptors (4E3) release of other mediators of inflammation (e.g. prostaglandins), (F) it has a cardioprotective effect (directly via bradykinin action, indirectly via endothelium-derived relaxing factor action). The chain is Kininogen-1 (Kng1) from Mus musculus (Mouse).